Consider the following 341-residue polypeptide: Glycerol-3-phosphate dehydrogenase [NAD(P)+] (341 aa).

Positions 15, 16, 36, and 110 each coordinate NADPH. The sn-glycerol 3-phosphate site is built by lysine 110, glycine 139, and serine 141. An NADPH-binding site is contributed by alanine 143. Positions 194, 247, 257, 258, and 259 each coordinate sn-glycerol 3-phosphate. Lysine 194 acts as the Proton acceptor in catalysis. An NADPH-binding site is contributed by arginine 258. Residues valine 282 and glutamate 284 each contribute to the NADPH site.

Belongs to the NAD-dependent glycerol-3-phosphate dehydrogenase family.

It localises to the cytoplasm. The catalysed reaction is sn-glycerol 3-phosphate + NAD(+) = dihydroxyacetone phosphate + NADH + H(+). It carries out the reaction sn-glycerol 3-phosphate + NADP(+) = dihydroxyacetone phosphate + NADPH + H(+). Its pathway is membrane lipid metabolism; glycerophospholipid metabolism. In terms of biological role, catalyzes the reduction of the glycolytic intermediate dihydroxyacetone phosphate (DHAP) to sn-glycerol 3-phosphate (G3P), the key precursor for phospholipid synthesis. This chain is Glycerol-3-phosphate dehydrogenase [NAD(P)+], found in Xanthomonas oryzae pv. oryzae (strain MAFF 311018).